Here is a 106-residue protein sequence, read N- to C-terminus: MKTLSLFFTLVILISSCVSNLMAKHDSERKAPFSNHGMRLQHPPYLHFQSYRGHFIPEECTELCPQRCLRRHRLMVSCIPQHFCRCSSFQLSPPHIATSPKQYSKK.

A signal peptide spans 1 to 23; it reads MKTLSLFFTLVILISSCVSNLMA. 3 cysteine pairs are disulfide-bonded: C60–C78, C64–C84, and C68–C86.

This sequence belongs to the DEFL family.

The protein localises to the secreted. This chain is Putative defensin-like protein 224, found in Arabidopsis thaliana (Mouse-ear cress).